The chain runs to 421 residues: Caspase-12 (421 aa).

One can recognise a CARD domain in the interval 1–92 (MADKKPSKED…QLSLEYQHES (92 aa)). Residue serine 85 is modified to Phosphoserine. Residues 88-131 (YQHESEDQESEESSASSSSSTESEEENEESKDEERAASAHSMAV) form a disordered region. The span at 109 to 118 (ESEEENEESK) shows a compositional bias: acidic residues. Active-site residues include histidine 252 and cysteine 300.

It belongs to the peptidase C14A family. In terms of assembly, heterotetramer that consists of two anti-parallel arranged heterodimers, each one formed by two subunits (Potential). May interact with TRAF2.

Its function is as follows. Involved in the activation cascade of caspases responsible for apoptosis execution. The chain is Caspase-12 from Macaca mulatta (Rhesus macaque).